The chain runs to 159 residues: Photosystem I reaction center subunit XI (159 aa).

Transmembrane regions (helical) follow at residues 53-73 (LEIG…LGPL), 84-104 (LISG…YGIV), and 125-145 (FTAG…TLLE).

This sequence belongs to the PsaL family.

It is found in the cellular thylakoid membrane. This Cyanothece sp. (strain PCC 7425 / ATCC 29141) protein is Photosystem I reaction center subunit XI.